The chain runs to 752 residues: Protein SEY1 homolog 1 (752 aa).

Topologically, residues 1 to 674 are cytoplasmic; the sequence is MIKNQGDRYH…QKHKQDFLQN (674 aa). The 226-residue stretch at 40–265 folds into the GB1/RHD3-type G domain; it reads GKKYNIVSII…YEKNVRWSDM (226 aa). Position 50–57 (50–57) interacts with GTP; sequence GSQSTGKS. The stretch at 445–465 forms a coiled coil; the sequence is NQLKSFVEAQLASFKQQLDNI. Residues 675–695 form a helical membrane-spanning segment; sequence IPKPFWFLLLFFMYDDVLRWM. The Lumenal portion of the chain corresponds to 696–698; the sequence is GNP. A helical transmembrane segment spans residues 699–719; sequence LFLYPILIILCFIGFCIAIGL. Residues 720–752 lie on the Cytoplasmic side of the membrane; that stretch reads HSLPKLAFQTVFRTINQALLPLIFGGISKLKTS.

Belongs to the TRAFAC class dynamin-like GTPase superfamily. GB1/RHD3 GTPase family. RHD3 subfamily.

The protein resides in the endoplasmic reticulum membrane. In terms of biological role, probable GTP-binding protein that may be involved in cell development. The chain is Protein SEY1 homolog 1 from Paramecium tetraurelia.